Here is an 89-residue protein sequence, read N- to C-terminus: Teretoxin Tan22.12 (89 aa).

The N-terminal stretch at 1 to 22 (MKVLFTLAMIVVTLCLGQRMRR) is a signal peptide.

It belongs to the teretoxin C (TC) superfamily. Contains 4 disulfide bonds. Expressed by the venom duct.

The protein localises to the secreted. This chain is Teretoxin Tan22.12, found in Terebra anilis (Auger snail).